The primary structure comprises 208 residues: MRAPQMGSLGFLDKGHIPLVLQLLFLILFTGLLVAIIIQVSKMPSSEEIQWEHTKQEKMYKDLSQLKSEVDRLCRLCPWDWTFFNGNCYFFSKSQRDWHDSMTACKEMGAQLVIIKSHEEQSFLQQTSKKNSYTWMGLSDLNKEGEWYWLDGSPLSDSFEKYWKKGQPNNVGGQDCVEFRDNGWNDAKCEQRKFWICKKIATTCLSKW.

At 1 to 16 (MRAPQMGSLGFLDKGH) the chain is on the cytoplasmic side. The helical; Signal-anchor for type II membrane protein transmembrane segment at 17-37 (IPLVLQLLFLILFTGLLVAII) threads the bilayer. The Extracellular segment spans residues 38 to 208 (IQVSKMPSSE…KIATTCLSKW (171 aa)). 3 cysteine pairs are disulfide-bonded: Cys-77–Cys-88, Cys-105–Cys-197, and Cys-176–Cys-189. Positions 83–198 (FFNGNCYFFS…CEQRKFWICK (116 aa)) constitute a C-type lectin domain.

The protein localises to the membrane. Functionally, putative pathogen-recognition receptor. May mediate the endocytosis of pathogens which are subsequently degraded in lysosomal compartments. This Mus musculus (Mouse) protein is CD209 antigen-like protein E (Cd209e).